A 381-amino-acid chain; its full sequence is Alanine racemase, catabolic (381 aa).

Lys55 acts as the Proton acceptor; specific for D-alanine in catalysis. Residue Lys55 is modified to N6-(pyridoxal phosphate)lysine. Arg154 is a binding site for substrate. The Proton acceptor; specific for L-alanine role is filled by Tyr276. Met322 contributes to the substrate binding site.

This sequence belongs to the alanine racemase family. The cofactor is pyridoxal 5'-phosphate.

The enzyme catalyses L-alanine = D-alanine. Its function is as follows. Isomerizes L-alanine to D-alanine which is then oxidized to pyruvate by DadA. The chain is Alanine racemase, catabolic (dadB) from Mesorhizobium japonicum (strain LMG 29417 / CECT 9101 / MAFF 303099) (Mesorhizobium loti (strain MAFF 303099)).